The chain runs to 497 residues: Glycerol kinase (497 aa).

Residue threonine 12 participates in ADP binding. 3 residues coordinate ATP: threonine 12, threonine 13, and serine 14. Residue threonine 12 participates in sn-glycerol 3-phosphate binding. Arginine 16 is a binding site for ADP. Sn-glycerol 3-phosphate contacts are provided by arginine 82, glutamate 83, tyrosine 134, and aspartate 243. Residues arginine 82, glutamate 83, tyrosine 134, aspartate 243, and glutamine 244 each coordinate glycerol. Threonine 265 and glycine 308 together coordinate ADP. ATP is bound by residues threonine 265, glycine 308, glutamine 312, and glycine 411. Glycine 411 provides a ligand contact to ADP.

It belongs to the FGGY kinase family.

It carries out the reaction glycerol + ATP = sn-glycerol 3-phosphate + ADP + H(+). Its pathway is polyol metabolism; glycerol degradation via glycerol kinase pathway; sn-glycerol 3-phosphate from glycerol: step 1/1. With respect to regulation, inhibited by fructose 1,6-bisphosphate (FBP). Key enzyme in the regulation of glycerol uptake and metabolism. Catalyzes the phosphorylation of glycerol to yield sn-glycerol 3-phosphate. The protein is Glycerol kinase of Rhizobium meliloti (strain 1021) (Ensifer meliloti).